The primary structure comprises 276 residues: Ribonuclease 3 (276 aa).

A disordered region spans residues 1–29 (MRGTVSVPKKAEDAKADPPAKKKADTQAS). Residues 9-25 (KKAEDAKADPPAKKKAD) show a composition bias toward basic and acidic residues. The region spanning 31–157 (HTLLEGRLGY…VIGAVYLDQG (127 aa)) is the RNase III domain. Glutamate 70 contacts Mg(2+). The active site involves aspartate 74. Residues aspartate 143 and glutamate 146 each coordinate Mg(2+). The active site involves glutamate 146. Residues 184-252 (DWKTSLQELT…AESAWRSIRA (69 aa)) form the DRBM domain. Residues 227–276 (YGTGTGRSKKEAEQQAAESAWRSIRAAADERAKATADAVDADPDEASASA) are disordered. The span at 265-276 (VDADPDEASASA) shows a compositional bias: acidic residues.

This sequence belongs to the ribonuclease III family. In terms of assembly, homodimer. Mg(2+) serves as cofactor.

Its subcellular location is the cytoplasm. It carries out the reaction Endonucleolytic cleavage to 5'-phosphomonoester.. Functionally, digests double-stranded RNA. Involved in the processing of primary rRNA transcript to yield the immediate precursors to the large and small rRNAs (23S and 16S). Also processes some mRNAs, and tRNAs when they are encoded in the rRNA operon. May modulate key aspects of gene expression as its absence has extensive effects on the abundance of about 200 different transcripts. Probably processes pre-crRNA and tracrRNA of type II CRISPR loci if present in the organism. The protein is Ribonuclease 3 (rnc) of Streptomyces coelicolor (strain ATCC BAA-471 / A3(2) / M145).